The chain runs to 940 residues: Protein translocase subunit SecA (940 aa).

Residues Gln-86, Gly-104 to Thr-108, and Asp-494 contribute to the ATP site. Residues Ala-884–Lys-940 are disordered. Residues Asn-929–Lys-940 are compositionally biased toward basic and acidic residues.

The protein belongs to the SecA family. In terms of assembly, monomer and homodimer. Part of the essential Sec protein translocation apparatus which comprises SecA, SecYEG and auxiliary proteins SecDF. Other proteins may also be involved.

It localises to the cell membrane. It is found in the cytoplasm. The enzyme catalyses ATP + H2O + cellular proteinSide 1 = ADP + phosphate + cellular proteinSide 2.. Functionally, part of the Sec protein translocase complex. Interacts with the SecYEG preprotein conducting channel. Has a central role in coupling the hydrolysis of ATP to the transfer of proteins into and across the cell membrane, serving as an ATP-driven molecular motor driving the stepwise translocation of polypeptide chains across the membrane. This chain is Protein translocase subunit SecA, found in Clavibacter sepedonicus (Clavibacter michiganensis subsp. sepedonicus).